A 405-amino-acid chain; its full sequence is Acetylornithine/succinyldiaminopimelate aminotransferase (405 aa).

Pyridoxal 5'-phosphate is bound by residues 107-108 and Phe140; that span reads GA. N(2)-acetyl-L-ornithine is bound at residue Arg143. 225-228 serves as a coordination point for pyridoxal 5'-phosphate; that stretch reads DEVQ. Lys254 is subject to N6-(pyridoxal phosphate)lysine. N(2)-acetyl-L-ornithine is bound at residue Thr282. A pyridoxal 5'-phosphate-binding site is contributed by Thr283.

Belongs to the class-III pyridoxal-phosphate-dependent aminotransferase family. ArgD subfamily. In terms of assembly, homodimer. Requires pyridoxal 5'-phosphate as cofactor.

The protein localises to the cytoplasm. The catalysed reaction is N(2)-acetyl-L-ornithine + 2-oxoglutarate = N-acetyl-L-glutamate 5-semialdehyde + L-glutamate. It carries out the reaction N-succinyl-(2S,6S)-2,6-diaminopimelate + 2-oxoglutarate = (S)-2-succinylamino-6-oxoheptanedioate + L-glutamate. It functions in the pathway amino-acid biosynthesis; L-arginine biosynthesis; N(2)-acetyl-L-ornithine from L-glutamate: step 4/4. It participates in amino-acid biosynthesis; L-lysine biosynthesis via DAP pathway; LL-2,6-diaminopimelate from (S)-tetrahydrodipicolinate (succinylase route): step 2/3. Its function is as follows. Involved in both the arginine and lysine biosynthetic pathways. The sequence is that of Acetylornithine/succinyldiaminopimelate aminotransferase from Yersinia pestis.